The following is a 580-amino-acid chain: Acyl--CoA ligase GME11374 (580 aa).

The protein belongs to the ATP-dependent AMP-binding enzyme family.

Its pathway is secondary metabolite biosynthesis. Acyl--CoA ligase; part of the gene cluster that mediates the biosynthesis of dibenzodioxocinones such as pestalotiollide B, a novel class of inhibitors against cholesterol ester transfer protein (CEPT). The biosynthesis initiates from condensation of acetate and malonate units catalyzed by the non-reducing PKS pks8/GME11356. Pks8/GME11356 lacks a thioesterase (TE) domain, which is important to the cyclizing of the third ring of atrochrysone carboxylic acid, and the esterase GME11355 might play the role of TE and catalyzes the cyclization reaction of the C ring. The lactamase-like protein GME11357 (or other beta-lactamases in Pestalotiopsis microspora) probably hydrolyzes the thioester bond between the ACP of pks8/GME11356 and the intermediate to release atrochrysone carboxylic acid, which is spontaneously dehydrates to form endocrocin anthrone. Endocrocin anthrone is further converted to emodin via the endocrocin intermediate. Emodin is then oxidized by several enzymes such as the Baeyer-Villiger oxidase GME11358, the oxidoreductase GME11367, the short chain dehydrogenase/reductase GME11373, as well as by other oxidoreductases from the cluster, to modify the A and C rings and open the B ring, and finally yield monodictyphenone. The prenyltransferase GME11375 may catalyze the addition reaction between the C5 side chains and the carbon bone of dibenzodioxocinones. The remaining biochemical reactions to the final product dibenzodioxocinones should be methylation catalyzed by methyltransferase GME11366 and reduction and lactonization reaction catalyzed by a series of oxidordeuctases. The chain is Acyl--CoA ligase GME11374 from Pestalotiopsis microspora.